Reading from the N-terminus, the 122-residue chain is Large ribosomal subunit protein uL14 (122 aa).

The protein belongs to the universal ribosomal protein uL14 family. In terms of assembly, part of the 50S ribosomal subunit. Forms a cluster with proteins L3 and L19. In the 70S ribosome, L14 and L19 interact and together make contacts with the 16S rRNA in bridges B5 and B8.

Functionally, binds to 23S rRNA. Forms part of two intersubunit bridges in the 70S ribosome. The polypeptide is Large ribosomal subunit protein uL14 (Syntrophobacter fumaroxidans (strain DSM 10017 / MPOB)).